A 493-amino-acid polypeptide reads, in one-letter code: Glycogen synthase 1 (493 aa).

Residue K15 participates in ADP-alpha-D-glucose binding.

The protein belongs to the glycosyltransferase 1 family. Bacterial/plant glycogen synthase subfamily.

The enzyme catalyses [(1-&gt;4)-alpha-D-glucosyl](n) + ADP-alpha-D-glucose = [(1-&gt;4)-alpha-D-glucosyl](n+1) + ADP + H(+). Its pathway is glycan biosynthesis; glycogen biosynthesis. In terms of biological role, synthesizes alpha-1,4-glucan chains using ADP-glucose. In Methylococcus capsulatus (strain ATCC 33009 / NCIMB 11132 / Bath), this protein is Glycogen synthase 1.